Here is a 317-residue protein sequence, read N- to C-terminus: Small ribosomal subunit protein RACK1 (317 aa).

WD repeat units lie at residues 15-55, 64-103, 106-146, 148-188, 191-230, 232-272, and 281-317; these read GHNG…DNQY, GHSH…TTQR, GHKG…ATLT, HNDW…VNAD, GHTG…TLYT, EAKA…DELK, and AKDP…TPSA.

Belongs to the WD repeat G protein beta family. Ribosomal protein RACK1 subfamily. Component of the small ribosomal subunit. Mature ribosomes consist of a small (40S) and a large (60S) subunit. The 40S subunit contains about 32 different proteins and 1 molecule of RNA (18S). The 60S subunit contains 45 different proteins and 3 molecules of RNA (25S, 5.8S and 5S).

The protein localises to the cytoplasm. In terms of biological role, component of the ribosome, a large ribonucleoprotein complex responsible for the synthesis of proteins in the cell. The small ribosomal subunit (SSU) binds messenger RNAs (mRNAs) and translates the encoded message by selecting cognate aminoacyl-transfer RNA (tRNA) molecules. The large subunit (LSU) contains the ribosomal catalytic site termed the peptidyl transferase center (PTC), which catalyzes the formation of peptide bonds, thereby polymerizing the amino acids delivered by tRNAs into a polypeptide chain. The nascent polypeptides leave the ribosome through a tunnel in the LSU and interact with protein factors that function in enzymatic processing, targeting, and the membrane insertion of nascent chains at the exit of the ribosomal tunnel. Located at the head of the 40S ribosomal subunit in the vicinity of the mRNA exit channel, it serves as a scaffold protein that can recruit other proteins to the ribosome. Involved in the negative regulation of translation of a specific subset of proteins. Plays a role in morphogenesis and pathogenesis. The polypeptide is Small ribosomal subunit protein RACK1 (Candida albicans (strain SC5314 / ATCC MYA-2876) (Yeast)).